The primary structure comprises 179 residues: MTLKNRYKESIRPKLLKDLGLKNIHQVPKVVKVNVNRGLGEAASNSKSLEASLNEMATITGQKALVTRAKKAIAGFKIREGMPIGCTVTLRGDRMYSFLERFINLALPRIRDFRGVNPKSFDGRGNYTVGVKEQLIFPEISFDKIDSIRGMDITIVTSARSDQEGKALLQELGMPFSKN.

This sequence belongs to the universal ribosomal protein uL5 family. As to quaternary structure, part of the 50S ribosomal subunit; part of the 5S rRNA/L5/L18/L25 subcomplex. Contacts the 5S rRNA and the P site tRNA. Forms a bridge to the 30S subunit in the 70S ribosome.

Its function is as follows. This is one of the proteins that bind and probably mediate the attachment of the 5S RNA into the large ribosomal subunit, where it forms part of the central protuberance. In the 70S ribosome it contacts protein S13 of the 30S subunit (bridge B1b), connecting the 2 subunits; this bridge is implicated in subunit movement. Contacts the P site tRNA; the 5S rRNA and some of its associated proteins might help stabilize positioning of ribosome-bound tRNAs. The sequence is that of Large ribosomal subunit protein uL5 from Prochlorococcus marinus (strain MIT 9312).